We begin with the raw amino-acid sequence, 751 residues long: Photosystem I P700 chlorophyll a apoprotein A1 (751 aa).

The next 8 helical transmembrane spans lie at 73-96 (VFSA…FHGA), 159-182 (LYAT…FHYH), 198-222 (MNHH…HISL), 294-312 (EAHH…GHQY), 349-372 (WHAQ…HHMY), 388-414 (LSLF…IFMV), 436-458 (AIIS…LYIH), and 533-551 (FLVH…LILL). [4Fe-4S] cluster contacts are provided by Cys-575 and Cys-584. The next 2 membrane-spanning stretches (helical) occupy residues 591-612 (HVFL…HFSW) and 665-687 (LSAY…MFLF). A chlorophyll a'-binding site is contributed by His-676. Chlorophyll a is bound by residues Met-684 and Tyr-692. Trp-693 lines the phylloquinone pocket. A helical transmembrane segment spans residues 725-745 (AVGVAHYLLGGIATTWSFFLA).

Belongs to the PsaA/PsaB family. As to quaternary structure, the PsaA/B heterodimer binds the P700 chlorophyll special pair and subsequent electron acceptors. PSI consists of a core antenna complex that captures photons, and an electron transfer chain that converts photonic excitation into a charge separation. The eukaryotic PSI reaction center is composed of at least 11 subunits. Requires P700 is a chlorophyll a/chlorophyll a' dimer, A0 is one or more chlorophyll a, A1 is one or both phylloquinones and FX is a shared 4Fe-4S iron-sulfur center. as cofactor.

The protein resides in the plastid. Its subcellular location is the chloroplast thylakoid membrane. The enzyme catalyses reduced [plastocyanin] + hnu + oxidized [2Fe-2S]-[ferredoxin] = oxidized [plastocyanin] + reduced [2Fe-2S]-[ferredoxin]. Functionally, psaA and PsaB bind P700, the primary electron donor of photosystem I (PSI), as well as the electron acceptors A0, A1 and FX. PSI is a plastocyanin/cytochrome c6-ferredoxin oxidoreductase, converting photonic excitation into a charge separation, which transfers an electron from the donor P700 chlorophyll pair to the spectroscopically characterized acceptors A0, A1, FX, FA and FB in turn. Oxidized P700 is reduced on the lumenal side of the thylakoid membrane by plastocyanin or cytochrome c6. This is Photosystem I P700 chlorophyll a apoprotein A1 from Oltmannsiellopsis viridis (Marine flagellate).